The sequence spans 28 residues: Cysteine-rich venom protein asurin-2 (28 aa).

A compositionally biased stretch (basic and acidic residues) spans 1 to 15; it reads SNKKDYRKEIVDKHN. The disordered stretch occupies residues 1 to 28; that stretch reads SNKKDYRKEIVDKHNALSRSVKPTASNM. Positions 17–28 are enriched in polar residues; sequence LSRSVKPTASNM.

This sequence belongs to the CRISP family. In terms of processing, contains 8 disulfide bonds. In terms of tissue distribution, expressed by the venom gland.

It is found in the secreted. Functionally, blocks contraction of smooth muscle elicited by high potassium-induced depolarization, but does not block caffeine-stimulated contraction. May target voltage-gated calcium channels on smooth muscle. The polypeptide is Cysteine-rich venom protein asurin-2 (Austrelaps superbus (Lowland copperhead snake)).